A 292-amino-acid polypeptide reads, in one-letter code: tRNA (guanine-N(1)-)-methyltransferase (292 aa).

Residues Gly-151 and 175 to 180 each bind S-adenosyl-L-methionine; that span reads IGDYVL.

Belongs to the RNA methyltransferase TrmD family. Homodimer.

The protein resides in the cytoplasm. It catalyses the reaction guanosine(37) in tRNA + S-adenosyl-L-methionine = N(1)-methylguanosine(37) in tRNA + S-adenosyl-L-homocysteine + H(+). Specifically methylates guanosine-37 in various tRNAs. The polypeptide is tRNA (guanine-N(1)-)-methyltransferase (Corynebacterium diphtheriae (strain ATCC 700971 / NCTC 13129 / Biotype gravis)).